The chain runs to 388 residues: Zinc finger C2H2 protein ECU10_0150 (388 aa).

The C2H2-type zinc finger occupies 299 to 322; the sequence is YKCGFCGKAFESEKFIFNHFNNKH.

The protein is Zinc finger C2H2 protein ECU10_0150 of Encephalitozoon cuniculi (strain GB-M1) (Microsporidian parasite).